A 148-amino-acid polypeptide reads, in one-letter code: Arginine repressor (148 aa).

This sequence belongs to the ArgR family.

It localises to the cytoplasm. Its pathway is amino-acid biosynthesis; L-arginine biosynthesis [regulation]. In terms of biological role, regulates arginine biosynthesis genes. The polypeptide is Arginine repressor (Pelodictyon phaeoclathratiforme (strain DSM 5477 / BU-1)).